We begin with the raw amino-acid sequence, 439 residues long: Glutamate--tRNA ligase 2 (439 aa).

The short motif at 6 to 16 (PSPTGDMHIGN) is the 'HIGH' region element. Residues 232–236 (KMSKR) carry the 'KMSKS' region motif. K235 is an ATP binding site.

This sequence belongs to the class-I aminoacyl-tRNA synthetase family. Glutamate--tRNA ligase type 1 subfamily. As to quaternary structure, monomer.

Its subcellular location is the cytoplasm. The catalysed reaction is tRNA(Glu) + L-glutamate + ATP = L-glutamyl-tRNA(Glu) + AMP + diphosphate. Catalyzes the attachment of glutamate to tRNA(Glu) in a two-step reaction: glutamate is first activated by ATP to form Glu-AMP and then transferred to the acceptor end of tRNA(Glu). This Helicobacter pylori (strain P12) protein is Glutamate--tRNA ligase 2.